A 63-amino-acid polypeptide reads, in one-letter code: Large ribosomal subunit protein bL28 (63 aa).

This sequence belongs to the bacterial ribosomal protein bL28 family.

The sequence is that of Large ribosomal subunit protein bL28 from Citrifermentans bemidjiense (strain ATCC BAA-1014 / DSM 16622 / JCM 12645 / Bem) (Geobacter bemidjiensis).